The following is a 339-amino-acid chain: HPr kinase/phosphorylase (339 aa).

Active-site residues include His153 and Lys174. 168-175 (GKSGLGKS) is a binding site for ATP. Mg(2+) is bound at residue Ser175. Catalysis depends on Asp192, which acts as the Proton acceptor; for phosphorylation activity. Proton donor; for dephosphorylation activity. Residues 216-225 (MEIRGLGVVD) form an important for the catalytic mechanism of both phosphorylation and dephosphorylation region. Glu217 lines the Mg(2+) pocket. The active site involves Arg258. The segment at 279 to 284 (PINPGK) is important for the catalytic mechanism of dephosphorylation.

The protein belongs to the HPrK/P family. Homohexamer. Mg(2+) is required as a cofactor.

The enzyme catalyses [HPr protein]-L-serine + ATP = [HPr protein]-O-phospho-L-serine + ADP + H(+). The catalysed reaction is [HPr protein]-O-phospho-L-serine + phosphate + H(+) = [HPr protein]-L-serine + diphosphate. Its function is as follows. Catalyzes the ATP- as well as the pyrophosphate-dependent phosphorylation of a specific serine residue in HPr, a phosphocarrier protein of the phosphoenolpyruvate-dependent sugar phosphotransferase system (PTS). HprK/P also catalyzes the pyrophosphate-producing, inorganic phosphate-dependent dephosphorylation (phosphorolysis) of seryl-phosphorylated HPr (P-Ser-HPr). The protein is HPr kinase/phosphorylase of Chlorobium phaeobacteroides (strain BS1).